A 238-amino-acid chain; its full sequence is Ribosomal RNA small subunit methyltransferase G (238 aa).

S-adenosyl-L-methionine contacts are provided by residues G75, L80, 126-127 (AE), and R142.

This sequence belongs to the methyltransferase superfamily. RNA methyltransferase RsmG family.

It is found in the cytoplasm. In terms of biological role, specifically methylates the N7 position of guanine in position 518 of 16S rRNA. This chain is Ribosomal RNA small subunit methyltransferase G, found in Streptomyces avermitilis (strain ATCC 31267 / DSM 46492 / JCM 5070 / NBRC 14893 / NCIMB 12804 / NRRL 8165 / MA-4680).